We begin with the raw amino-acid sequence, 349 residues long: S-adenosylmethionine:tRNA ribosyltransferase-isomerase (349 aa).

This sequence belongs to the QueA family. In terms of assembly, monomer.

Its subcellular location is the cytoplasm. It catalyses the reaction 7-aminomethyl-7-carbaguanosine(34) in tRNA + S-adenosyl-L-methionine = epoxyqueuosine(34) in tRNA + adenine + L-methionine + 2 H(+). It participates in tRNA modification; tRNA-queuosine biosynthesis. Its function is as follows. Transfers and isomerizes the ribose moiety from AdoMet to the 7-aminomethyl group of 7-deazaguanine (preQ1-tRNA) to give epoxyqueuosine (oQ-tRNA). The protein is S-adenosylmethionine:tRNA ribosyltransferase-isomerase of Pseudomonas putida (strain ATCC 700007 / DSM 6899 / JCM 31910 / BCRC 17059 / LMG 24140 / F1).